A 336-amino-acid polypeptide reads, in one-letter code: RHOMBOID-like protein 12, mitochondrial (336 aa).

The N-terminal 85 residues, 1–85 (MKAIFNRRVV…RGFFASALGN (85 aa)), are a transit peptide targeting the mitochondrion. Helical transmembrane passes span 135–155 (VVLGLVIANAGVFVMWRVFNQ), 185–205 (IDIGHIVSNMIGLYFFGTSIA), 216–236 (LYLAGALGGSVFYLIHHAYMA), 254–274 (PGLGASGAVNAIMLLDIFLHP), 276–296 (ATLYLEFFIPVPAMLLGIFLI), and 307–327 (NSNISGSAHLGGAAVAAIAWA). The Nucleophile role is filled by Ser-259. The active-site Charge relay system is the His-315.

It belongs to the peptidase S54 family.

It localises to the mitochondrion membrane. Its function is as follows. Probable rhomboid-type serine protease that catalyzes intramembrane proteolysis. Unable to cleave either of the yeast Pcp1 substrates in yeast cells. The protein is RHOMBOID-like protein 12, mitochondrial of Arabidopsis thaliana (Mouse-ear cress).